We begin with the raw amino-acid sequence, 363 residues long: MEESIKLLVGCYEQVLFGYRVHREGEQWLSSADFTHHAHTASVSVLAVNNRFVATGSRDETIQIYDMKKKVEHGALLHHNGTITCLEFYGNTHLLSGAEDGLICVWNTKKWECQQTFKAHKGQVLSLSIHPSGKLALSVGTDKTLRTWNLVEGRSAFIKNIKKNAHIVHWSPSGEKYVVVIHDTVDVYQLETAAVVGTINNPKRISSAQFITDALIAVAGDEEVIRLYDTASQKCVCEFKAHENRVKNLHVIELQGTHVVVSSSSDGYIKMWRIDMEKVQTSPSLLCEVSTSARLTCLSAWLPSGVDHKEKSNTAVTASAVKDCDRPKKKKAQNETTDKEASETQVVHKKRKPETKQKKKKPS.

WD repeat units follow at residues 38-75 (AHTASVSVLAVNNRFVATGSRDETIQIYDMKKKVEHGA), 78-116 (HHNGTITCLEFYGNTHLLSGAEDGLICVWNTKKWECQQT), 119-158 (AHKGQVLSLSIHPSGKLALSVGTDKTLRTWNLVEGRSAFI), 200-238 (NNPKRISSAQFITDALIAVAGDEEVIRLYDTASQKCVCE), and 241-282 (AHEN…VQTS). Positions 309-363 (KEKSNTAVTASAVKDCDRPKKKKAQNETTDKEASETQVVHKKRKPETKQKKKKPS) are disordered. Residues 322–342 (KDCDRPKKKKAQNETTDKEAS) show a composition bias toward basic and acidic residues. The span at 347-363 (VHKKRKPETKQKKKKPS) shows a compositional bias: basic residues.

The protein resides in the nucleus. The protein localises to the nucleolus. Negatively regulates the PAK1 kinase. PAK1 is a member of the PAK kinase family, which has been shown to play a positive role in the regulation of signaling pathways involving MAPK8 and RELA. PAK1 exists as an inactive homodimer, which is activated by binding of small GTPases such as CDC42 to an N-terminal regulatory domain. PAK1IP1 also binds to the N-terminus of PAK1, and inhibits the specific activation of PAK1 by CDC42. May be involved in ribosomal large subunit assembly. This Xenopus laevis (African clawed frog) protein is p21-activated protein kinase-interacting protein 1-like (pak1ip1).